The chain runs to 619 residues: Dihydroxy-acid dehydratase (619 aa).

Asp81 is a binding site for Mg(2+). Cys122 contributes to the [2Fe-2S] cluster binding site. Residues Asp123 and Lys124 each contribute to the Mg(2+) site. The residue at position 124 (Lys124) is an N6-carboxylysine. Cys195 is a [2Fe-2S] cluster binding site. Glu494 provides a ligand contact to Mg(2+). The active-site Proton acceptor is the Ser520.

Belongs to the IlvD/Edd family. As to quaternary structure, homodimer. [2Fe-2S] cluster serves as cofactor. Requires Mg(2+) as cofactor.

The catalysed reaction is (2R)-2,3-dihydroxy-3-methylbutanoate = 3-methyl-2-oxobutanoate + H2O. The enzyme catalyses (2R,3R)-2,3-dihydroxy-3-methylpentanoate = (S)-3-methyl-2-oxopentanoate + H2O. It functions in the pathway amino-acid biosynthesis; L-isoleucine biosynthesis; L-isoleucine from 2-oxobutanoate: step 3/4. It participates in amino-acid biosynthesis; L-valine biosynthesis; L-valine from pyruvate: step 3/4. In terms of biological role, functions in the biosynthesis of branched-chain amino acids. Catalyzes the dehydration of (2R,3R)-2,3-dihydroxy-3-methylpentanoate (2,3-dihydroxy-3-methylvalerate) into 2-oxo-3-methylpentanoate (2-oxo-3-methylvalerate) and of (2R)-2,3-dihydroxy-3-methylbutanoate (2,3-dihydroxyisovalerate) into 2-oxo-3-methylbutanoate (2-oxoisovalerate), the penultimate precursor to L-isoleucine and L-valine, respectively. This is Dihydroxy-acid dehydratase from Shewanella frigidimarina (strain NCIMB 400).